The following is a 388-amino-acid chain: Succinate--CoA ligase [ADP-forming] subunit beta (388 aa).

An ATP-grasp domain is found at 9 to 244 (KQLFARSGLP…QSQEDPREAQ (236 aa)). Residues Lys46, 53–55 (GRG), Glu99, Thr102, and Glu107 each bind ATP. Positions 199 and 213 each coordinate Mg(2+). Residues Asn264 and 321 to 323 (GIV) contribute to the substrate site.

The protein belongs to the succinate/malate CoA ligase beta subunit family. In terms of assembly, heterotetramer of two alpha and two beta subunits. The cofactor is Mg(2+).

It carries out the reaction succinate + ATP + CoA = succinyl-CoA + ADP + phosphate. It catalyses the reaction GTP + succinate + CoA = succinyl-CoA + GDP + phosphate. It functions in the pathway carbohydrate metabolism; tricarboxylic acid cycle; succinate from succinyl-CoA (ligase route): step 1/1. Succinyl-CoA synthetase functions in the citric acid cycle (TCA), coupling the hydrolysis of succinyl-CoA to the synthesis of either ATP or GTP and thus represents the only step of substrate-level phosphorylation in the TCA. The beta subunit provides nucleotide specificity of the enzyme and binds the substrate succinate, while the binding sites for coenzyme A and phosphate are found in the alpha subunit. The polypeptide is Succinate--CoA ligase [ADP-forming] subunit beta (Cronobacter sakazakii (strain ATCC BAA-894) (Enterobacter sakazakii)).